The following is a 275-amino-acid chain: Intercellular adhesion molecule 2 (275 aa).

The signal sequence occupies residues 1–24; that stretch reads MSSFGYRTLTVALFALICCPGSDE. The Extracellular segment spans residues 25 to 223; sequence KVFEVHVRPK…EIYEPVSDSQ (199 aa). The Ig-like C2-type 1 domain maps to 41–98; it reads KASLEVNCSTTCNQPEVGGLETSLDKILLDEQAQWKHYLVSNISHDTVLQCHFTCSGK. 7 N-linked (GlcNAc...) asparagine glycosylation sites follow: Asn47, Asn82, Asn105, Asn153, Asn158, Asn176, and Asn187. Disulfide bonds link Cys48/Cys91 and Cys52/Cys95. The region spanning 127-197 is the Ig-like C2-type 2 domain; that stretch reads GKSFTIECRV…FSCLAVLDLI (71 aa). Cys134 and Cys190 are oxidised to a cystine. The helical transmembrane segment at 224–248 threads the bilayer; sequence MVIIVTVVSVLLSLFVTSVLLCFIF. Topologically, residues 249-275 are cytoplasmic; sequence GQHLRQQRMGTYGVRAAWRRLPQAFRP. Residues 251–275 form a required for interaction with EZR, MSN and RDX and co-localization to microvilli region; that stretch reads HLRQQRMGTYGVRAAWRRLPQAFRP.

It belongs to the immunoglobulin superfamily. ICAM family. In terms of assembly, interacts with RDX, EZR and MSN.

Its subcellular location is the membrane. The protein resides in the cell projection. It is found in the microvillus. ICAM proteins are ligands for the leukocyte adhesion protein LFA-1 (integrin alpha-L/beta-2). ICAM2 may play a role in lymphocyte recirculation by blocking LFA-1-dependent cell adhesion. It mediates adhesive interactions important for antigen-specific immune response, NK-cell mediated clearance, lymphocyte recirculation, and other cellular interactions important for immune response and surveillance. The sequence is that of Intercellular adhesion molecule 2 (ICAM2) from Gorilla gorilla gorilla (Western lowland gorilla).